The primary structure comprises 757 residues: Voltage-gated potassium channel KCNC3 (757 aa).

The important for normal N-type inactivation stretch occupies residues 1 to 78; the sequence is MLSSVCVSSF…CPGLPAAAMG (78 aa). The interval 1–87 is disordered; that stretch reads MLSSVCVSSF…GRHGGGGGDS (87 aa). At 1 to 290 the chain is on the cytoplasmic side; that stretch reads MLSSVCVSSF…EDPYSSRAAR (290 aa). Over residues 21–40 the composition is skewed to pro residues; sequence PAPPPQPPESPPPPPLPPQQ. The segment covering 41 to 52 has biased composition (low complexity); sequence QQPAQPGPAASP. Positions 157, 163, 184, and 185 each coordinate Zn(2+). Residues 210–219 show a composition bias toward low complexity; the sequence is AANAANAAGA. The segment at 210-232 is disordered; it reads AANAANAAGAHDGGLDDEAGAGG. Residues 291-309 form a helical membrane-spanning segment; the sequence is YVAFASLFFILISITTFCL. Residues asparagine 320 and asparagine 336 are each glycosylated (N-linked (GlcNAc...) asparagine). The chain crosses the membrane as a helical span at residues 351 to 370; the sequence is VEGVCVVWFTFEFLMRITFC. Residues 371–379 lie on the Cytoplasmic side of the membrane; the sequence is PDKVEFLKS. A helical transmembrane segment spans residues 380–398; sequence SLNIIDCVAILPFYLEVGL. The helical; Voltage-sensor transmembrane segment at 412–434 threads the bilayer; that stretch reads FLRVVRFVRILRIFKLTRHFVGL. At 435–447 the chain is on the cytoplasmic side; that stretch reads RVLGHTLRASTNE. Residues 448–469 traverse the membrane as a helical segment; the sequence is FLLLIIFLALGVLIFATMIYYA. Asparagine 483 is a glycosylation site (N-linked (GlcNAc...) asparagine). Residues threonine 503, leucine 504, glycine 505, and tyrosine 506 each coordinate K(+). A Selectivity filter motif is present at residues 503–508; sequence TLGYGD. Residues 518-539 form a helical membrane-spanning segment; sequence LVGALCALAGVLTIAMPVPVIV. At 540 to 757 the chain is on the cytoplasmic side; the sequence is NNFGMYYSLA…NANAAAWISP (218 aa). The interval 556–613 is disordered; it reads PKKKNKHIPRPPQPGSPNYCKPDPPPPPPPHPHHGSGGISPPPPITPPSMGVTVAGAY. The residue at position 625 (arginine 625) is an Omega-N-methylarginine. Residues 682–746 form a disordered region; that stretch reads QPAMSPEDKS…KPGPPSFLPD (65 aa). 2 positions are modified to phosphoserine: serine 686 and serine 691. A compositionally biased stretch (pro residues) spans 728–743; sequence PPLPPQDWRKPGPPSF.

This sequence belongs to the potassium channel family. C (Shaw) (TC 1.A.1.2) subfamily. Kv3.3/KCNC3 sub-subfamily. In terms of assembly, homotetramer. Heterotetramer with KCNC1. Interacts (via C-terminus) with HAX1; this interaction modulates channel gating. Identified in a complex with ACTR3, a subunit of the Arp2/3 complex; this interaction is indirect and depends on the presence of HAX1. In terms of processing, N-glycosylated.

Its subcellular location is the cell membrane. It localises to the presynaptic cell membrane. It is found in the perikaryon. The protein resides in the cell projection. The protein localises to the axon. Its subcellular location is the dendrite. It localises to the dendritic spine membrane. It is found in the cytoplasm. The protein resides in the cell cortex. The protein localises to the cytoskeleton. It catalyses the reaction K(+)(in) = K(+)(out). In terms of biological role, voltage-gated potassium channel that plays an important role in the rapid repolarization of fast-firing brain neurons. The channel opens in response to the voltage difference across the membrane, forming a potassium-selective channel through which potassium ions pass in accordance with their electrochemical gradient. The channel displays rapid activation and inactivation kinetics. It plays a role in the regulation of the frequency, shape and duration of action potentials in Purkinje cells. Required for normal survival of cerebellar neurons, probably via its role in regulating the duration and frequency of action potentials that in turn regulate the activity of voltage-gated Ca(2+) channels and cellular Ca(2+) homeostasis. Required for normal motor function. Plays a role in the reorganization of the cortical actin cytoskeleton and the formation of actin veil structures in neuronal growth cones via its interaction with HAX1 and the Arp2/3 complex. The sequence is that of Voltage-gated potassium channel KCNC3 (KCNC3) from Homo sapiens (Human).